We begin with the raw amino-acid sequence, 740 residues long: Phosphoribosylformylglycinamidine synthase subunit PurL (740 aa).

Residue His49 is part of the active site. Positions 52 and 91 each coordinate ATP. Glu93 is a binding site for Mg(2+). Residues 94–97 (SHNH) and Arg116 each bind substrate. Residue His95 is the Proton acceptor of the active site. Asp117 provides a ligand contact to Mg(2+). Gln245 lines the substrate pocket. Asp273 contacts Mg(2+). 317–319 (ESQ) lines the substrate pocket. ATP-binding residues include Asp501 and Gly538. Asn539 contributes to the Mg(2+) binding site. Ser541 provides a ligand contact to substrate.

This sequence belongs to the FGAMS family. Monomer. Part of the FGAM synthase complex composed of 1 PurL, 1 PurQ and 2 PurS subunits.

The protein localises to the cytoplasm. The catalysed reaction is N(2)-formyl-N(1)-(5-phospho-beta-D-ribosyl)glycinamide + L-glutamine + ATP + H2O = 2-formamido-N(1)-(5-O-phospho-beta-D-ribosyl)acetamidine + L-glutamate + ADP + phosphate + H(+). It participates in purine metabolism; IMP biosynthesis via de novo pathway; 5-amino-1-(5-phospho-D-ribosyl)imidazole from N(2)-formyl-N(1)-(5-phospho-D-ribosyl)glycinamide: step 1/2. Part of the phosphoribosylformylglycinamidine synthase complex involved in the purines biosynthetic pathway. Catalyzes the ATP-dependent conversion of formylglycinamide ribonucleotide (FGAR) and glutamine to yield formylglycinamidine ribonucleotide (FGAM) and glutamate. The FGAM synthase complex is composed of three subunits. PurQ produces an ammonia molecule by converting glutamine to glutamate. PurL transfers the ammonia molecule to FGAR to form FGAM in an ATP-dependent manner. PurS interacts with PurQ and PurL and is thought to assist in the transfer of the ammonia molecule from PurQ to PurL. The sequence is that of Phosphoribosylformylglycinamidine synthase subunit PurL from Sulfurovum sp. (strain NBC37-1).